We begin with the raw amino-acid sequence, 388 residues long: Beta-1,4-galactosyltransferase 5 (388 aa).

The Cytoplasmic portion of the chain corresponds to 1–14 (MRVRRGLLRLPRRS). Residues 15–35 (LLAALFFFSLSSSLLYFVYVA) form a helical; Signal-anchor for type II membrane protein membrane-spanning segment. Residues 36-388 (PGIVNTYLFM…TPELAQVTEY (353 aa)) are Lumenal-facing. 5 N-linked (GlcNAc...) asparagine glycosylation sites follow: Asn-77, Asn-81, Asn-90, Asn-111, and Asn-128. The cysteines at positions 114 and 158 are disulfide-linked. UDP-alpha-D-galactose-binding positions include 169–173 (PFRNR), 208–210 (FNR), 235–236 (VD), Tyr-264, and Trp-296. A disulfide bridge connects residues Cys-229 and Cys-248. Asp-236 contributes to the Mn(2+) binding site. 298–301 (GEDD) serves as a coordination point for N-acetyl-D-glucosamine. UDP-alpha-D-galactose is bound at residue 329–330 (YH). Residue Arg-340 coordinates N-acetyl-D-glucosamine. 2 N-linked (GlcNAc...) asparagine glycosylation sites follow: Asn-364 and Asn-373.

Belongs to the glycosyltransferase 7 family. (Microbial infection) Interacts with porcine reproductive and respiratory syndrome virus GP5. Mn(2+) is required as a cofactor.

It localises to the golgi apparatus. Its subcellular location is the golgi stack membrane. It carries out the reaction a beta-D-glucosyl-(1&lt;-&gt;1')-N-acylsphing-4-enine + UDP-alpha-D-galactose = a beta-D-Gal-(1-&gt;4)-beta-D-Glc-(1&lt;-&gt;1)-Cer(d18:1(4E)) + UDP + H(+). Its pathway is protein modification; protein glycosylation. The protein operates within sphingolipid metabolism. Functionally, catalyzes the synthesis of lactosylceramide (LacCer) via the transfer of galactose from UDP-galactose to glucosylceramide (GlcCer). LacCer is the starting point in the biosynthesis of all gangliosides (membrane-bound glycosphingolipids) which play pivotal roles in the CNS including neuronal maturation and axonal and myelin formation. Plays a role in the glycosylation of BMPR1A and regulation of its protein stability. Essential for extraembryonic development during early embryogenesis. In terms of biological role, (Microbial infection) May play a role in the glycosylation of porcine reproductive and respiratory syndrome virus GP5 protein and may be involved in the regulation of viral proliferation. In Sus scrofa (Pig), this protein is Beta-1,4-galactosyltransferase 5 (B4GALT5).